The primary structure comprises 158 residues: Transcription elongation factor GreA (158 aa).

Positions 4–75 (EKTYPMTQEG…TQLENMIRNA (72 aa)) form a coiled coil.

This sequence belongs to the GreA/GreB family.

In terms of biological role, necessary for efficient RNA polymerase transcription elongation past template-encoded arresting sites. The arresting sites in DNA have the property of trapping a certain fraction of elongating RNA polymerases that pass through, resulting in locked ternary complexes. Cleavage of the nascent transcript by cleavage factors such as GreA or GreB allows the resumption of elongation from the new 3'terminus. GreA releases sequences of 2 to 3 nucleotides. This Bacillus anthracis (strain A0248) protein is Transcription elongation factor GreA.